Consider the following 77-residue polypeptide: Translation initiation factor IF-1, chloroplastic (77 aa).

Residues 1–71 (MKEQKWIHEG…TRGRIIYRLR (71 aa)) enclose the S1-like domain.

Belongs to the IF-1 family. As to quaternary structure, component of the 30S ribosomal translation pre-initiation complex which assembles on the 30S ribosome in the order IF-2 and IF-3, IF-1 and N-formylmethionyl-tRNA(fMet); mRNA recruitment can occur at any time during PIC assembly.

It localises to the plastid. The protein resides in the chloroplast. Functionally, one of the essential components for the initiation of protein synthesis. Stabilizes the binding of IF-2 and IF-3 on the 30S subunit to which N-formylmethionyl-tRNA(fMet) subsequently binds. Helps modulate mRNA selection, yielding the 30S pre-initiation complex (PIC). Upon addition of the 50S ribosomal subunit IF-1, IF-2 and IF-3 are released leaving the mature 70S translation initiation complex. The protein is Translation initiation factor IF-1, chloroplastic of Spinacia oleracea (Spinach).